The following is a 156-amino-acid chain: Small ribosomal subunit protein uS7 (156 aa).

It belongs to the universal ribosomal protein uS7 family. As to quaternary structure, part of the 30S ribosomal subunit. Contacts proteins S9 and S11.

Its function is as follows. One of the primary rRNA binding proteins, it binds directly to 16S rRNA where it nucleates assembly of the head domain of the 30S subunit. Is located at the subunit interface close to the decoding center, probably blocks exit of the E-site tRNA. The protein is Small ribosomal subunit protein uS7 of Synechocystis sp. (strain ATCC 27184 / PCC 6803 / Kazusa).